Consider the following 354-residue polypeptide: UPF0283 membrane protein plu2581 (354 aa).

3 helical membrane-spanning segments follow: residues methionine 71–isoleucine 91, serine 101–valine 121, and glutamate 214–tryptophan 234.

It belongs to the UPF0283 family.

It is found in the cell inner membrane. The polypeptide is UPF0283 membrane protein plu2581 (Photorhabdus laumondii subsp. laumondii (strain DSM 15139 / CIP 105565 / TT01) (Photorhabdus luminescens subsp. laumondii)).